The sequence spans 75 residues: uncharacterized protein (75 aa).

The first 26 residues, Met-1–Ala-26, serve as a signal peptide directing secretion.

It localises to the secreted. This is an uncharacterized protein from Schizosaccharomyces pombe (strain 972 / ATCC 24843) (Fission yeast).